Reading from the N-terminus, the 453-residue chain is Chromosomal replication initiator protein DnaA (453 aa).

The tract at residues 1 to 73 (MSKEEIWDKV…ADLIEKAIGT (73 aa)) is domain I, interacts with DnaA modulators. A domain II region spans residues 73–114 (TKLMPNFVIQEDLTEDKQVKDSAKAKSEAKPDVQAPQNSSED). A compositionally biased stretch (basic and acidic residues) spans 91–103 (VKDSAKAKSEAKP). Residues 91-113 (VKDSAKAKSEAKPDVQAPQNSSE) form a disordered region. The segment at 115–331 (QFNVHNTFET…GALTRVIAYS (217 aa)) is domain III, AAA+ region. Positions 159, 161, 162, and 163 each coordinate ATP. The interval 332-453 (RLQNEAITTE…ENLEKEIRNQ (122 aa)) is domain IV, binds dsDNA.

Belongs to the DnaA family. In terms of assembly, oligomerizes as a right-handed, spiral filament on DNA at oriC.

It is found in the cytoplasm. Its function is as follows. Plays an essential role in the initiation and regulation of chromosomal replication. ATP-DnaA binds to the origin of replication (oriC) to initiate formation of the DNA replication initiation complex once per cell cycle. Binds the DnaA box (a 9 base pair repeat at the origin) and separates the double-stranded (ds)DNA. Forms a right-handed helical filament on oriC DNA; dsDNA binds to the exterior of the filament while single-stranded (ss)DNA is stabiized in the filament's interior. The ATP-DnaA-oriC complex binds and stabilizes one strand of the AT-rich DNA unwinding element (DUE), permitting loading of DNA polymerase. After initiation quickly degrades to an ADP-DnaA complex that is not apt for DNA replication. Binds acidic phospholipids. This chain is Chromosomal replication initiator protein DnaA, found in Staphylococcus carnosus (strain TM300).